Consider the following 358-residue polypeptide: Arginase (358 aa).

Mn(2+) is bound by residues H146, D174, H176, and D178. Substrate is bound by residues H176–N180, S187–N189, and D233. Residues D280 and D282 each coordinate Mn(2+). Residues T294 and E325 each coordinate substrate.

Belongs to the arginase family. In terms of assembly, homohexamer. Requires Mn(2+) as cofactor.

It localises to the cytoplasm. It catalyses the reaction L-arginine + H2O = urea + L-ornithine. Its pathway is nitrogen metabolism; urea cycle; L-ornithine and urea from L-arginine: step 1/1. This chain is Arginase (aga-1), found in Neurospora crassa (strain ATCC 24698 / 74-OR23-1A / CBS 708.71 / DSM 1257 / FGSC 987).